Reading from the N-terminus, the 520-residue chain is Putative thymidine phosphorylase 1 (520 aa).

The protein belongs to the thymidine/pyrimidine-nucleoside phosphorylase family. Type 2 subfamily.

The enzyme catalyses thymidine + phosphate = 2-deoxy-alpha-D-ribose 1-phosphate + thymine. This Cupriavidus necator (strain ATCC 17699 / DSM 428 / KCTC 22496 / NCIMB 10442 / H16 / Stanier 337) (Ralstonia eutropha) protein is Putative thymidine phosphorylase 1.